The chain runs to 203 residues: Putative 3-methyladenine DNA glycosylase (203 aa).

It belongs to the DNA glycosylase MPG family.

The chain is Putative 3-methyladenine DNA glycosylase from Mycobacterium tuberculosis (strain ATCC 25177 / H37Ra).